The chain runs to 535 residues: Sodium/hydrogen exchanger 9B2 (535 aa).

The segment covering 1-14 has biased composition (basic and acidic residues); it reads MRNQDKRAAHKDSE. The segment at 1-70 is disordered; it reads MRNQDKRAAH…TPAEPNHLQR (70 aa). The Cytoplasmic portion of the chain corresponds to 1 to 85; the sequence is MRNQDKRAAH…ACPPRGLLAR (85 aa). Polar residues-rich tracts occupy residues 16–34 and 46–58; these read STEVNHTASSYQGRQQETG and TEGSNLLNNNEKM. A helical transmembrane segment spans residues 86–103; that stretch reads VITNVTMVILLWAVVWSV. At 104-112 the chain is on the extracellular side; the sequence is TGSECLPGG. A helical transmembrane segment spans residues 113-132; the sequence is NLFGIIMLFYCAIIGGKLFG. Residues 133–143 are Cytoplasmic-facing; that stretch reads LIKLPTLPPLP. The chain crosses the membrane as a helical span at residues 144–160; that stretch reads PLLGMLLAGFLIRNVPV. At 161–170 the chain is on the extracellular side; it reads ISDNIQIKHK. The chain crosses the membrane as a helical span at residues 171 to 188; sequence WSSALRSIALSVILVRAG. The Cytoplasmic segment spans residues 189-199; sequence LGLDSNALKKL. The chain crosses the membrane as a helical span at residues 200–226; that stretch reads KGVCVRLSLGPCLIEACTSAVLAYFLM. At 227 to 232 the chain is on the extracellular side; sequence GLPWQW. Residues 233–241 form a helical membrane-spanning segment; it reads GFMLGFVLG. Over 242-269 the chain is Cytoplasmic; sequence AVSPAVVVPSMLLLQEGGYGVEKGIPTL. Residues valine 243, glycine 274, aspartate 277, and aspartate 278 each contribute to the Na(+) site. The helical transmembrane segment at 270–289 threads the bilayer; the sequence is LMAAGSFDDILAITGFNTCL. The Extracellular segment spans residues 290-299; it reads GMAFSTGSTV. A helical transmembrane segment spans residues 300-323; sequence FNVLKGVLEVIIGVVTGLVLGFFI. The Cytoplasmic portion of the chain corresponds to 324-338; sequence QYFPSSDQDNLVWKR. A helical transmembrane segment spans residues 339-356; it reads AFLVLGLSVLAVFSSTYF. The Extracellular segment spans residues 357–360; sequence GFPG. Residues 361 to 372 traverse the membrane as a helical segment; it reads SGGLCTLVTAFL. Residues 373-389 lie on the Cytoplasmic side of the membrane; sequence AGRGWASTKTDVEKVIA. The helical transmembrane segment at 390–410 threads the bilayer; that stretch reads VAWDIFQPLLFGLIGAEVLIT. Residues 411 to 416 lie on the Extracellular side of the membrane; the sequence is ALRPET. Residues 417-439 traverse the membrane as a helical segment; that stretch reads IGLCVATLGIAVLIRILVTYLMV. At 440–460 the chain is on the cytoplasmic side; sequence CFAGFNIKEKIFISFAWLPKA. The helical transmembrane segment at 461–472 threads the bilayer; that stretch reads TVQAAIGSVALD. Over 473 to 485 the chain is Extracellular; the sequence is TARSHGEKQLEGY. Residues 486–508 form a helical membrane-spanning segment; it reads GMDVLTVAFLSIIITAPVGSLLI. The Cytoplasmic segment spans residues 509–535; that stretch reads GLLGPRLLQKAEQNKDEEDQGETSIQV.

Belongs to the monovalent cation:proton antiporter 1 (CPA1) transporter (TC 2.A.36) family. As to quaternary structure, homodimer; dimerization is essential for SLC9B2 activity. Lipids seem to play a role in the stabilization of the dimerization subdomain.

Its subcellular location is the cell membrane. The protein localises to the mitochondrion membrane. It localises to the endosome membrane. The protein resides in the recycling endosome membrane. It is found in the lysosome membrane. Its subcellular location is the cytoplasmic vesicle. The protein localises to the secretory vesicle. It localises to the synaptic vesicle membrane. The protein resides in the cell projection. It is found in the cilium. Its subcellular location is the flagellum membrane. The protein localises to the basolateral cell membrane. It localises to the apical cell membrane. It carries out the reaction Li(+)(out) + H(+)(in) = Li(+)(in) + H(+)(out). It catalyses the reaction Li(+)(in) + Na(+)(out) = Li(+)(out) + Na(+)(in). The enzyme catalyses Na(+)(in) + H(+)(out) = Na(+)(out) + H(+)(in). Its activity is regulated as follows. Allosterically inhibited by the N-terminal domain. Inhibited by phloretin. In terms of biological role, electroneutral Na(+) Li(+)/H(+) antiporter that extrudes Na(+) or Li(+) in exchange for external protons across the membrane. Uses the proton gradient/membrane potential to extrude sodium. Contributes to the regulation of intracellular pH and sodium homeostasis. Also able to mediate Na(+)/Li(+) antiporter activity in kidney. May play a physiological role in renal tubular function and blood pressure homeostasis. Plays an important role for insulin secretion and clathrin-mediated endocytosis in beta-cells. Involved in sperm motility and fertility. It is controversial whether SLC9B2 plays a role in osteoclast differentiation or not. The chain is Sodium/hydrogen exchanger 9B2 (SLC9B2) from Bison bison bison (North American plains bison).